The following is a 926-amino-acid chain: Serine/threonine-protein kinase SIK2 (926 aa).

A Protein kinase domain is found at 20-271; the sequence is YDIEGTLGKG…IAQIKEHKWM (252 aa). A Phosphothreonine modification is found at T25. Residues 26–34 and K49 contribute to the ATP site; that span reads LGKGNFAVV. At K53 the chain carries N6-acetyllysine; by EP300. Catalysis depends on D142, which acts as the Proton acceptor. The residue at position 175 (T175) is a Phosphothreonine; by LKB1. The 41-residue stretch at 295-335 folds into the UBA domain; the sequence is EFNEQVLRLMHSLGIDQQKTIESLQNKSYNHFAAIYFLLVE. The residue at position 484 (T484) is a Phosphothreonine. S534 and S587 each carry phosphoserine. Low complexity-rich tracts occupy residues 644-659 and 742-756; these read SSCP…ESVS and SSYP…LPRQ. Disordered regions lie at residues 644 to 666, 742 to 776, and 801 to 896; these read SSCP…ASVH, SSYP…PLSP, and PLPS…SSYD. Over residues 765–774 the composition is skewed to polar residues; that stretch reads APPFSLTQPL. Positions 822-834 are enriched in pro residues; that stretch reads QPPPPPPPPPPRQ.

Belongs to the protein kinase superfamily. CAMK Ser/Thr protein kinase family. SNF1 subfamily. In terms of assembly, interacts with and phosphorylates TORC2/CRTC2. Mg(2+) serves as cofactor. Phosphorylated at Thr-175 by STK11/LKB1 in complex with STE20-related adapter-alpha (STRADA) pseudo kinase and CAB39. Phosphorylated at Thr-484 in response to insulin in adipocytes. Post-translationally, acetylation at Lys-53 inhibits kinase activity. Deacetylated by HDAC6.

The protein localises to the cytoplasm. Its subcellular location is the endoplasmic reticulum membrane. It carries out the reaction L-seryl-[protein] + ATP = O-phospho-L-seryl-[protein] + ADP + H(+). The enzyme catalyses L-threonyl-[protein] + ATP = O-phospho-L-threonyl-[protein] + ADP + H(+). With respect to regulation, activated by phosphorylation on Thr-175. Functionally, serine/threonine-protein kinase that plays a role in many biological processes such as fatty acid oxidation, autophagy, immune response or glucose metabolism. Phosphorylates 'Ser-794' of IRS1 in insulin-stimulated adipocytes, potentially modulating the efficiency of insulin signal transduction. Inhibits CREB activity by phosphorylating and repressing TORCs, the CREB-specific coactivators. Phosphorylates EP300 and thus inhibits its histone acetyltransferase activity. In turn, regulates the DNA-binding ability of several transcription factors such as PPARA or MLXIPL. Also plays a role in thymic T-cell development. This chain is Serine/threonine-protein kinase SIK2 (SIK2), found in Homo sapiens (Human).